The chain runs to 291 residues: N-acetylmannosamine kinase (291 aa).

ATP is bound by residues 5–12 (AVDIGGTK) and 132–139 (GVGGGIVV). His-156, Cys-166, Cys-168, and Cys-173 together coordinate Zn(2+).

It belongs to the ROK (NagC/XylR) family. NanK subfamily. Homodimer.

The enzyme catalyses an N-acyl-D-mannosamine + ATP = an N-acyl-D-mannosamine 6-phosphate + ADP + H(+). The protein operates within amino-sugar metabolism; N-acetylneuraminate degradation; D-fructose 6-phosphate from N-acetylneuraminate: step 2/5. In terms of biological role, catalyzes the phosphorylation of N-acetylmannosamine (ManNAc) to ManNAc-6-P. The polypeptide is N-acetylmannosamine kinase (nanK2) (Escherichia coli O6:H1 (strain CFT073 / ATCC 700928 / UPEC)).